The chain runs to 607 residues: Elongation factor 4 (607 aa).

The tr-type G domain maps to 11 to 193 (ENIRNFSIIA…KIVDVVPAPD (183 aa)). Residues 23-28 (DHGKST) and 140-143 (NKID) each bind GTP.

The protein belongs to the TRAFAC class translation factor GTPase superfamily. Classic translation factor GTPase family. LepA subfamily.

It localises to the cell membrane. It catalyses the reaction GTP + H2O = GDP + phosphate + H(+). Required for accurate and efficient protein synthesis under certain stress conditions. May act as a fidelity factor of the translation reaction, by catalyzing a one-codon backward translocation of tRNAs on improperly translocated ribosomes. Back-translocation proceeds from a post-translocation (POST) complex to a pre-translocation (PRE) complex, thus giving elongation factor G a second chance to translocate the tRNAs correctly. Binds to ribosomes in a GTP-dependent manner. The polypeptide is Elongation factor 4 (Staphylococcus epidermidis (strain ATCC 35984 / DSM 28319 / BCRC 17069 / CCUG 31568 / BM 3577 / RP62A)).